An 80-amino-acid polypeptide reads, in one-letter code: UPF0248 protein YG5714_2801 (80 aa).

The protein belongs to the UPF0248 family.

In Saccharolobus islandicus (strain Y.G.57.14 / Yellowstone #1) (Sulfolobus islandicus), this protein is UPF0248 protein YG5714_2801.